The sequence spans 223 residues: Ras-related protein Rab-21 (223 aa).

Residue alanine 2 is modified to N-acetylalanine. 10 residues coordinate GTP: glycine 26, glycine 29, lysine 30, threonine 31, serine 32, asparagine 43, aspartate 44, histidine 46, threonine 48, and threonine 49. Threonine 31 contacts Mg(2+). Positions 41–54 (KFNDKHITTLQASF) match the Switch 1 motif. Threonine 49 and aspartate 72 together coordinate Mg(2+). Positions 74–92 (AGQERFHALGPIYYRDSNG) match the Switch 2 motif. Residues glycine 75, asparagine 130, lysine 131, aspartate 133, alanine 161, and lysine 162 each contribute to the GTP site. Residues cysteine 219 and cysteine 220 are each lipidated (S-geranylgeranyl cysteine). Position 220 is a cysteine methyl ester (cysteine 220). A propeptide spans 221–223 (SSG) (removed in mature form).

Belongs to the small GTPase superfamily. Rab family. Interacts with the cytoplasmic tail of integrins ITGA1, ITGA2, ITGA5, ITGA6, ITGA11 and ITGB1; this interaction is dependent upon its GDP/GTP cycle. Interacts with RABGEF1 (via VPS9 domain). Interacts with ANKRD27. Interacts (in GTP-bound form) with VAMP8 in response to starvation; the interaction probably regulates VAMP8 endolysosomal trafficking. Interacts (active GTP-bound form) with TMED10; the interaction is indirect and regulates TMED10 abundance and localization at the Golgi. The cofactor is Mg(2+).

It localises to the endoplasmic reticulum membrane. The protein resides in the golgi apparatus. Its subcellular location is the trans-Golgi network. It is found in the golgi apparatus membrane. The protein localises to the early endosome membrane. It localises to the cytoplasmic vesicle membrane. The protein resides in the cleavage furrow. Its subcellular location is the cell projection. It is found in the neuron projection. It carries out the reaction GTP + H2O = GDP + phosphate + H(+). Regulated by guanine nucleotide exchange factors (GEFs) including ANKRD27 and RABGEF1, which promote the exchange of bound GDP for free GTP. Regulated by GTPase activating proteins (GAPs) which increase the GTP hydrolysis activity. Inhibited by GDP dissociation inhibitors (GDIs). In terms of biological role, the small GTPases Rab are key regulators of intracellular membrane trafficking, from the formation of transport vesicles to their fusion with membranes. Rabs cycle between an inactive GDP-bound form and an active GTP-bound form that is able to recruit to membranes different sets of downstream effectors directly responsible for vesicle formation, movement, tethering and fusion. RAB21 is involved in membrane trafficking control. Regulates integrin internalization and recycling, but does not influence the traffic of endosomally translocated receptors in general. As a result, may regulate cell adhesion and migration. During the mitosis of adherent cells, controls the endosomal trafficking of integrins which is required for the successful completion of cytokinesis. Involved in neurite growth. Following SBF2/MTMT13-mediated activation in response to starvation-induced autophagy, binds to and regulates SNARE protein VAMP8 endolysosomal transport required for SNARE-mediated autophagosome-lysosome fusion. Modulates protein levels of the cargo receptors TMED2 and TMED10, and required for appropriate Golgi localization of TMED10. The chain is Ras-related protein Rab-21 from Rattus norvegicus (Rat).